Here is a 66-residue protein sequence, read N- to C-terminus: Large ribosomal subunit protein bL31 (66 aa).

The Zn(2+) site is built by Cys-16, Cys-18, Cys-36, and Cys-39.

Belongs to the bacterial ribosomal protein bL31 family. Type A subfamily. As to quaternary structure, part of the 50S ribosomal subunit. Zn(2+) serves as cofactor.

Binds the 23S rRNA. This is Large ribosomal subunit protein bL31 from Geobacillus sp. (strain WCH70).